The following is a 154-amino-acid chain: Transcriptional repressor NrdR (154 aa).

Residues M1–N22 are disordered. A zinc finger spans residues C3 to C34. The 91-residue stretch at L49 to G139 folds into the ATP-cone domain.

The protein belongs to the NrdR family. Zn(2+) serves as cofactor.

Its function is as follows. Negatively regulates transcription of bacterial ribonucleotide reductase nrd genes and operons by binding to NrdR-boxes. The sequence is that of Transcriptional repressor NrdR from Lactobacillus johnsonii (strain CNCM I-12250 / La1 / NCC 533).